We begin with the raw amino-acid sequence, 215 residues long: Putative BTB/POZ domain-containing protein At2g05330 (215 aa).

The BTB domain maps to 17–87; it reads SWQKIGKLTY…LYSDGSMLSS (71 aa).

It functions in the pathway protein modification; protein ubiquitination. May act as a substrate-specific adapter of an E3 ubiquitin-protein ligase complex (CUL3-RBX1-BTB) which mediates the ubiquitination and subsequent proteasomal degradation of target proteins. The sequence is that of Putative BTB/POZ domain-containing protein At2g05330 from Arabidopsis thaliana (Mouse-ear cress).